Consider the following 155-residue polypeptide: Ribosomal RNA large subunit methyltransferase H (155 aa).

Residues leucine 73, glycine 104, and 123 to 128 (LSPLTL) contribute to the S-adenosyl-L-methionine site.

Belongs to the RNA methyltransferase RlmH family. In terms of assembly, homodimer.

Its subcellular location is the cytoplasm. It carries out the reaction pseudouridine(1915) in 23S rRNA + S-adenosyl-L-methionine = N(3)-methylpseudouridine(1915) in 23S rRNA + S-adenosyl-L-homocysteine + H(+). Functionally, specifically methylates the pseudouridine at position 1915 (m3Psi1915) in 23S rRNA. This is Ribosomal RNA large subunit methyltransferase H from Pseudomonas aeruginosa (strain LESB58).